The sequence spans 369 residues: tRNA/tmRNA (uracil-C(5))-methyltransferase (369 aa).

5 residues coordinate S-adenosyl-L-methionine: Q192, Y221, N226, E242, and D302. C327 serves as the catalytic Nucleophile. The active-site Proton acceptor is the E361.

Belongs to the class I-like SAM-binding methyltransferase superfamily. RNA M5U methyltransferase family. TrmA subfamily.

It carries out the reaction uridine(54) in tRNA + S-adenosyl-L-methionine = 5-methyluridine(54) in tRNA + S-adenosyl-L-homocysteine + H(+). The catalysed reaction is uridine(341) in tmRNA + S-adenosyl-L-methionine = 5-methyluridine(341) in tmRNA + S-adenosyl-L-homocysteine + H(+). Functionally, dual-specificity methyltransferase that catalyzes the formation of 5-methyluridine at position 54 (m5U54) in all tRNAs, and that of position 341 (m5U341) in tmRNA (transfer-mRNA). The polypeptide is tRNA/tmRNA (uracil-C(5))-methyltransferase (Haemophilus ducreyi (strain 35000HP / ATCC 700724)).